The chain runs to 194 residues: Potassium-transporting ATPase KdpC subunit (194 aa).

Residues Leu-12–Phe-34 traverse the membrane as a helical segment.

This sequence belongs to the KdpC family. In terms of assembly, the system is composed of three essential subunits: KdpA, KdpB and KdpC.

Its subcellular location is the cell inner membrane. Part of the high-affinity ATP-driven potassium transport (or Kdp) system, which catalyzes the hydrolysis of ATP coupled with the electrogenic transport of potassium into the cytoplasm. This subunit acts as a catalytic chaperone that increases the ATP-binding affinity of the ATP-hydrolyzing subunit KdpB by the formation of a transient KdpB/KdpC/ATP ternary complex. This is Potassium-transporting ATPase KdpC subunit from Salmonella choleraesuis (strain SC-B67).